We begin with the raw amino-acid sequence, 281 residues long: AT-hook motif nuclear-localized protein 20 (281 aa).

Disordered stretches follow at residues 43–85 (MNQS…APIF) and 216–247 (MEEE…DLSG). A DNA-binding region (a.T hook) is located at residues 67–79 (RRPRGRPPGSKNK). Residues 91-229 (PNALRSHVLE…EDGGGSRQIH (139 aa)) enclose the PPC domain.

The protein resides in the nucleus. In terms of biological role, transcription factor that specifically binds AT-rich DNA sequences related to the nuclear matrix attachment regions (MARs). Negatively regulates plant innate immunity (PTI) to pathogens through the down-regulation of the PAMP-triggered NHO1 and FRK1 expression. This is AT-hook motif nuclear-localized protein 20 from Arabidopsis thaliana (Mouse-ear cress).